A 372-amino-acid chain; its full sequence is Histidinol-phosphate aminotransferase (372 aa).

K234 bears the N6-(pyridoxal phosphate)lysine mark.

This sequence belongs to the class-II pyridoxal-phosphate-dependent aminotransferase family. Histidinol-phosphate aminotransferase subfamily. As to quaternary structure, homodimer. It depends on pyridoxal 5'-phosphate as a cofactor.

It catalyses the reaction L-histidinol phosphate + 2-oxoglutarate = 3-(imidazol-4-yl)-2-oxopropyl phosphate + L-glutamate. Its pathway is amino-acid biosynthesis; L-histidine biosynthesis; L-histidine from 5-phospho-alpha-D-ribose 1-diphosphate: step 7/9. This chain is Histidinol-phosphate aminotransferase (hisC), found in Corynebacterium efficiens (strain DSM 44549 / YS-314 / AJ 12310 / JCM 11189 / NBRC 100395).